Consider the following 617-residue polypeptide: tRNA 5-methylaminomethyl-2-thiouridine biosynthesis bifunctional protein MnmC (617 aa).

A tRNA (mnm(5)s(2)U34)-methyltransferase region spans residues 1–226; that stretch reads MLDWQNGQLY…KREMLQGDLP (226 aa). The tract at residues 241–617 is FAD-dependent cmnm(5)s(2)U34 oxidoreductase; the sequence is IGGGIAGCAA…SPAIPVSIKG (377 aa).

It in the N-terminal section; belongs to the methyltransferase superfamily. tRNA (mnm(5)s(2)U34)-methyltransferase family. This sequence in the C-terminal section; belongs to the DAO family. Requires FAD as cofactor.

The protein resides in the cytoplasm. The catalysed reaction is 5-aminomethyl-2-thiouridine(34) in tRNA + S-adenosyl-L-methionine = 5-methylaminomethyl-2-thiouridine(34) in tRNA + S-adenosyl-L-homocysteine + H(+). Catalyzes the last two steps in the biosynthesis of 5-methylaminomethyl-2-thiouridine (mnm(5)s(2)U) at the wobble position (U34) in tRNA. Catalyzes the FAD-dependent demodification of cmnm(5)s(2)U34 to nm(5)s(2)U34, followed by the transfer of a methyl group from S-adenosyl-L-methionine to nm(5)s(2)U34, to form mnm(5)s(2)U34. The polypeptide is tRNA 5-methylaminomethyl-2-thiouridine biosynthesis bifunctional protein MnmC (Nitrosospira multiformis (strain ATCC 25196 / NCIMB 11849 / C 71)).